The following is a 343-amino-acid chain: 3-hydroxy-3-methylglutaryl-CoA lyase, cytoplasmic (343 aa).

Residue Gly2 is the site of N-myristoyl glycine attachment. A Pyruvate carboxyltransferase domain is found at Val48–Met315. Residue Arg56 participates in substrate binding. Asp57, His248, and His250 together coordinate a divalent metal cation. Cys281 is a catalytic residue. Residue Asn290 participates in a divalent metal cation binding.

It belongs to the HMG-CoA lyase family. A divalent metal cation serves as cofactor.

Its subcellular location is the cytoplasm. The protein resides in the cytosol. The protein localises to the endoplasmic reticulum membrane. It catalyses the reaction (3S)-3-hydroxy-3-methylglutaryl-CoA = acetoacetate + acetyl-CoA. It participates in metabolic intermediate metabolism; (S)-3-hydroxy-3-methylglutaryl-CoA degradation; acetoacetate from (S)-3-hydroxy-3-methylglutaryl-CoA: step 1/1. Non-mitochondrial 3-hydroxy-3-methylglutaryl-CoA lyase that catalyzes a cation-dependent cleavage of (S)-3-hydroxy-3-methylglutaryl-CoA into acetyl-CoA and acetoacetate, a key step in ketogenesis, the products of which support energy production in nonhepatic animal tissues. This is 3-hydroxy-3-methylglutaryl-CoA lyase, cytoplasmic (Hmgcll1) from Mus musculus (Mouse).